A 114-amino-acid polypeptide reads, in one-letter code: Superoxide dismutase [Cu-Zn] (114 aa).

Cu cation contacts are provided by histidine 37, histidine 39, and histidine 54. Positions 49 to 73 (MSSGPHYNPRNKEHGAPTDENRHLG) are disordered. Positions 54, 62, 71, and 74 each coordinate Zn(2+). Residues 58-73 (RNKEHGAPTDENRHLG) show a composition bias toward basic and acidic residues. Histidine 111 contributes to the Cu cation binding site.

It belongs to the Cu-Zn superoxide dismutase family. Homodimer. Requires Cu cation as cofactor. Zn(2+) serves as cofactor.

It is found in the cytoplasm. It catalyses the reaction 2 superoxide + 2 H(+) = H2O2 + O2. Functionally, destroys radicals which are normally produced within the cells and which are toxic to biological systems. The chain is Superoxide dismutase [Cu-Zn] from Drosophila madeirensis (Fruit fly).